We begin with the raw amino-acid sequence, 628 residues long: MAAPPLSSWPWASLGSYKYVLYGAVVWKVAEEWRQQGAAPVGSWWLHLLLLFAARGLTYQFWFSYGNMLFFTRRRRVVPDSVDFRQVDAEWDWDNFLLLQTLIGATLVGSPAVARQQLLLPSLKQAWDPRGWAIALLLHVLVAEPLFYWAHRALHRAPLFSRYHAAHHHASVTTPLTAGFGTPLESLLLTVVIGVPLAGAFLMGVGSVGLVYGHVLLFDFLRSMGYSNVEVISPRVFQAVPLLRYLIYTPTYLSLHHREKDSNFCLFMPIFDLLGGTLNHKSWELQKEVYLGKNDQAPDFVFLAHVVDIMASMHVPFVLRSCSSTPFANHFVLLPFWPVAFGFMLLMWCCSKNFLVSSYRLRGNLHQMWTVPRYGFQYFIPAAKKGINEQIELAILRADRMGVKVLSLAALNKNEALNGGGTLFVNKHPELRVRVVHGNTLTAAVILNEIPSNVKDVFLTGATSKLGRAIALYLCRKKIRVLMLTLSSERFLKIQREAPAEFQQYLVQVTKYQPAQNCKTWLVGKWLSPREQRWAPAGTHFHQFVVPPIIGFRRDCTYGKLAAMRLPKDVQGLGYCEYTMERGVVHACHAGGVVHFLEGWEHHEVGAIDVDRIDVVWKAALKHGLTPA.

The next 5 membrane-spanning stretches (helical) occupy residues 37 to 57, 131 to 151, 191 to 211, 299 to 319, and 331 to 351; these read GAAP…ARGL, GWAI…YWAH, VVIG…VGLV, DFVF…PFVL, and FVLL…WCCS. In terms of domain architecture, Fatty acid hydroxylase spans 137 to 277; sequence LLHVLVAEPL…MPIFDLLGGT (141 aa).

Belongs to the sterol desaturase family. Homodimer.

The protein resides in the endoplasmic reticulum membrane. The catalysed reaction is a long-chain fatty aldehyde + 2 NADPH + O2 + H(+) = a long-chain alkane + formate + 2 NADP(+) + H2O. In terms of biological role, aldehyde decarbonylase involved in the conversion of aldehydes to alkanes. Core component of a very-long-chain alkane synthesis complex. The polypeptide is Very-long-chain aldehyde decarbonylase GL1-2 (Oryza sativa subsp. indica (Rice)).